Here is a 1104-residue protein sequence, read N- to C-terminus: MEIAINRLNADKDLEVFHDLDVNYVDTSKTAGPRAARTAALNNATVAAMGLMRDCYIQSTILNINLKIAVSDVCEMDLSSVKGFDQTSVLMNSQTNSLAKSVMYFLDKYQWKKVALVSPSAVLTAFAARVRSDLLDALTANKIDILVDSRLDPMSDITEKVKEDAEKARIFIICDWSSNANLLRNYIFKLGEMNKMQSGEYFVLGYISYDTNYQWLEASSGDQRLVHLGASDINDYNLTENDLHEVYKNVVILSDGPPPAEPNSTWEDIKTQVLKKKPAKMCPPYCNTTISEKITPRWDRIKLLFDSIQYLADATNDALNIGANIYQSDIFYEHLISRKVDSVTGVTEYIDGYGAIVGSMQIYYHFSSSSHNSYSLFPCARLAQSSLLNTVWSLTDYSEGLSIDFVNKSAPKDTPVCGFYGENCGPPANNTFIIVISVGVAVLIGLAIAAAFLYKRYRYERRLHSLFFMIDRNQIILKKHTNLMSQQSLRSMASIHGSVVAASQTLRDSHFFIEDYNNASSINASSIFNTGSTARAGPFGPIPGFGGVTGASEDEKWHQIPDFGVGLYEGRTVALKRIYRSDVEFTRSNRLEIAKLQESVNSNVIEFVGMVVQSPDVFVVYELAQRGSLKDILDNDDMPLDDVFRSQMTKDIIAGLEYLHSSPVGCHGRLKSTNCLIDARWMVRLSSFGLRELRGEETWQQEDDVQEGKDQLWTSPELLRWSTGLSQCGVLLVQKSDVYSLAIVLYELFGRLGPWGDEPMEPREIVSLVKREALAGKKPFRPDMAVLKESPRIVQETVVAAWTEDPLNRPSLHQIKRKLKPLTIGLKRTIMDNMVSMIEKYTDKLEKDIAERNEELEAEKAKSEALLKMMLPEVVADSLKLGSNVSAESFENCTVFFSDCPGFVEMSATSKPIDIVQFLNDLYTVFDRIIDQFDVYKVETIADAYMVASGLPVPNGNHHAGEIASLGLALLKAVESFKIRHLPNEKVRLRIGMNSGPCVAGVVGLKMPRYCLFGDTVNTASRMESNGIPLRINCSGTAKEILDQLGGYEIEERGIVEMKGKGKQMTYFVRGENSDMRRERIIRERVKFASLKKAQIQEKTYEFS.

Over Met-1–Thr-431 the chain is Extracellular. N-linked (GlcNAc...) asparagine glycans are attached at residues Asn-43, Asn-237, Asn-263, Asn-287, Asn-407, and Asn-429. The helical transmembrane segment at Phe-432–Phe-452 threads the bilayer. The Cytoplasmic segment spans residues Leu-453 to Ser-1104. One can recognise a Protein kinase domain in the interval Phe-528–Thr-823. ATP-binding positions include Ala-534 to Ile-542 and Lys-576. The stretch at Ile-838–Leu-871 forms a coiled coil. The Guanylate cyclase domain occupies Thr-894–Glu-1024.

It belongs to the adenylyl cyclase class-4/guanylyl cyclase family. In terms of tissue distribution, expressed bilaterally in ASG sensory neurons.

Its subcellular location is the cell membrane. It catalyses the reaction GTP = 3',5'-cyclic GMP + diphosphate. Guanylate cyclase involved in the production of the second messenger cGMP. This chain is Receptor-type guanylate cyclase gcy-15, found in Caenorhabditis elegans.